A 372-amino-acid chain; its full sequence is MTSLETYNDNVKTALIMCFLSGLSTAIGGLYVIFIKQQSHKLLGHLLSFSSGVMIYISFMDLLPESIAEIGFYNANIWFFVGIIFFAVILRFVPHDHDESGDSNHAHSHNGASIEKHSSEKKEVVDDDDDDNNGKDKKQKQQKQKQQKQQQQQKQNIAKSKNKKKSKDDYLNSVGIATAIGVSLHNFPEGVAVYLACLKGIDVGLPLMLAIAAHNIPEGMAVAAPIFSATGSKWKAFKYCLYSGLCEPVGAIIFGLIFKEYMTPYLIQSMLAAVAGIMVFMVIKELLPAAFKYVSVDESAFSNIIGMIFFFFSIHFLHSMLPHDHGGAGDGGHGHSHGGHGHSHGHGHSHGGHSHDSQHVESPQSSSFNAFA.

A run of 3 helical transmembrane segments spans residues Leu-15–Ile-35, Leu-42–Leu-62, and Ile-70–Leu-90. Residues Glu-99–Ser-166 form a disordered region. The span at Ile-114–Val-124 shows a compositional bias: basic and acidic residues. Positions Asn-133 to Lys-167 form a coiled coil. Residues Lys-137–Gln-146 show a composition bias toward basic residues. Residues Gln-147–Lys-159 show a composition bias toward low complexity. The next 5 helical transmembrane spans lie at Tyr-170 to Ala-192, Leu-207 to Ala-229, Phe-237 to Ile-257, Leu-271 to Phe-291, and Phe-301 to Leu-321. The segment at Ala-328–Ala-372 is disordered. The segment covering Gly-334 to Gly-352 has biased composition (basic residues). Positions Val-360–Ala-372 are enriched in polar residues.

The protein belongs to the ZIP transporter (TC 2.A.5) family. ZupT subfamily.

It is found in the membrane. May transport divalent cations. May participate, with dstA, in the regulation of the differentiation of stalk cells during development. The protein is Protein zntB (zntB) of Dictyostelium discoideum (Social amoeba).